The following is a 759-amino-acid chain: Phosphoribosylformylglycinamidine synthase subunit PurL (759 aa).

The active site involves His-61. Tyr-64 and Lys-105 together coordinate ATP. Residue Glu-107 participates in Mg(2+) binding. Residues 108–111 and Arg-130 each bind substrate; that span reads SHNH. Residue His-109 is the Proton acceptor of the active site. Residue Asp-131 participates in Mg(2+) binding. Gln-260 provides a ligand contact to substrate. Asp-288 is a Mg(2+) binding site. 332 to 334 provides a ligand contact to substrate; that stretch reads ESQ. Positions 520 and 557 each coordinate ATP. Asn-558 serves as a coordination point for Mg(2+). Ser-560 lines the substrate pocket.

Belongs to the FGAMS family. In terms of assembly, monomer. Part of the FGAM synthase complex composed of 1 PurL, 1 PurQ and 2 PurS subunits.

Its subcellular location is the cytoplasm. The catalysed reaction is N(2)-formyl-N(1)-(5-phospho-beta-D-ribosyl)glycinamide + L-glutamine + ATP + H2O = 2-formamido-N(1)-(5-O-phospho-beta-D-ribosyl)acetamidine + L-glutamate + ADP + phosphate + H(+). Its pathway is purine metabolism; IMP biosynthesis via de novo pathway; 5-amino-1-(5-phospho-D-ribosyl)imidazole from N(2)-formyl-N(1)-(5-phospho-D-ribosyl)glycinamide: step 1/2. Part of the phosphoribosylformylglycinamidine synthase complex involved in the purines biosynthetic pathway. Catalyzes the ATP-dependent conversion of formylglycinamide ribonucleotide (FGAR) and glutamine to yield formylglycinamidine ribonucleotide (FGAM) and glutamate. The FGAM synthase complex is composed of three subunits. PurQ produces an ammonia molecule by converting glutamine to glutamate. PurL transfers the ammonia molecule to FGAR to form FGAM in an ATP-dependent manner. PurS interacts with PurQ and PurL and is thought to assist in the transfer of the ammonia molecule from PurQ to PurL. This Thermoplasma acidophilum (strain ATCC 25905 / DSM 1728 / JCM 9062 / NBRC 15155 / AMRC-C165) protein is Phosphoribosylformylglycinamidine synthase subunit PurL.